A 256-amino-acid polypeptide reads, in one-letter code: Small ribosomal subunit protein uS2 (256 aa).

It belongs to the universal ribosomal protein uS2 family.

The sequence is that of Small ribosomal subunit protein uS2 from Acidiphilium cryptum (strain JF-5).